The chain runs to 61 residues: Photosystem II reaction center protein K (61 aa).

Positions 1-24 (MLNIFSLICICLNSVLYSSSFFVA) are excised as a propeptide. Residues 40–60 (MPVIPVLFFLLAFVWQAAVSF) traverse the membrane as a helical segment.

The protein belongs to the PsbK family. PSII is composed of 1 copy each of membrane proteins PsbA, PsbB, PsbC, PsbD, PsbE, PsbF, PsbH, PsbI, PsbJ, PsbK, PsbL, PsbM, PsbT, PsbX, PsbY, PsbZ, Psb30/Ycf12, at least 3 peripheral proteins of the oxygen-evolving complex and a large number of cofactors. It forms dimeric complexes.

It is found in the plastid. The protein resides in the chloroplast thylakoid membrane. Its function is as follows. One of the components of the core complex of photosystem II (PSII). PSII is a light-driven water:plastoquinone oxidoreductase that uses light energy to abstract electrons from H(2)O, generating O(2) and a proton gradient subsequently used for ATP formation. It consists of a core antenna complex that captures photons, and an electron transfer chain that converts photonic excitation into a charge separation. This is Photosystem II reaction center protein K from Morus indica (Mulberry).